The sequence spans 777 residues: 1,4-alpha-glucan branching enzyme GlgB (777 aa).

Aspartate 408 (nucleophile) is an active-site residue. Glutamate 461 functions as the Proton donor in the catalytic mechanism.

Belongs to the glycosyl hydrolase 13 family. GlgB subfamily. As to quaternary structure, monomer.

The enzyme catalyses Transfers a segment of a (1-&gt;4)-alpha-D-glucan chain to a primary hydroxy group in a similar glucan chain.. Its pathway is glycan biosynthesis; glycogen biosynthesis. Catalyzes the formation of the alpha-1,6-glucosidic linkages in glycogen by scission of a 1,4-alpha-linked oligosaccharide from growing alpha-1,4-glucan chains and the subsequent attachment of the oligosaccharide to the alpha-1,6 position. This chain is 1,4-alpha-glucan branching enzyme GlgB, found in Actinobacillus pleuropneumoniae serotype 3 (strain JL03).